Here is a 554-residue protein sequence, read N- to C-terminus: Calcium-dependent protein kinase 3 (554 aa).

Residues 30 to 55 (KKKSSNKSIKSQHKFEGSKIANKNNE) form a disordered region. The Protein kinase domain occupies 110–365 (NLSEEPLGKG…ASEALKHPWF (256 aa)). ATP is bound by residues 116 to 124 (LGKGTYGCV) and K139. D230 (proton acceptor) is an active-site residue. The J domain autoinhibitory motif motif lies at 385-393 (NFKNYALLL). Residues 385-420 (NFKNYALLLKLQKLAMTIIAQQSNDYDLQQLKTVFL) are j domain. The J domain EF-hand interaction motif motif lies at 394–403 (KLQKLAMTII). EF-hand domains are found at residues 410-445 (YDLQQLKTVFLYLDEDGKGNITKNQLKKGLENSGLK), 448-479 (QNFDVLLDQIDSDGSGRIDYTEFLAAALDRKH), 480-515 (LSKKLIYCAFRVFDVDNDGEITTAELAHILYNGNKK), and 521-554 (KDVNQVKKMIQEVDKNNDGKIDFYEFCEMMKLKY). Positions 458, 460, 462, 464, 469, 493, 495, 497, 499, 504, 534, 536, 538, 540, and 545 each coordinate Ca(2+).

The protein belongs to the protein kinase superfamily. Ser/Thr protein kinase family. CDPK subfamily. It depends on Mg(2+) as a cofactor.

Its subcellular location is the cytoplasm. It carries out the reaction L-seryl-[protein] + ATP = O-phospho-L-seryl-[protein] + ADP + H(+). The catalysed reaction is L-threonyl-[protein] + ATP = O-phospho-L-threonyl-[protein] + ADP + H(+). Its activity is regulated as follows. Activated by calcium. Upon calcium binding to the EF-hand domain 2, the C-terminus of the junction domain (J domain) undergoes a conformational change which results in the dissociation of the pseudo-substrate inhibitory motif from the catalytic domain. This, in turn, may facilitate the autophosphorylation of the activation loop at Thr-271, which leads to the kinase activation. In terms of biological role, calcium-dependent protein kinase which acts as a sensor and effector of intracellular Ca(2+) levels probably in part downstream of cGMP-activated PKG kinase. In the mosquito midgut, regulates the gliding motility of the ookinete which is essential for the ookinete to invade the midgut epithelium. However, another study showed that while required for ookinete invasion of the midgut epithelium, is not required for ookinete gliding motility. The chain is Calcium-dependent protein kinase 3 from Plasmodium berghei (strain Anka).